We begin with the raw amino-acid sequence, 463 residues long: RuvB-like 2 (463 aa).

Residue 77-84 coordinates ATP; the sequence is GQPGTGKT.

It belongs to the RuvB family. As to quaternary structure, forms homohexameric rings. Can form a dodecamer with ruvbl1 made of two stacked hexameric rings. Component of the chromatin-remodeling Ino80 complex. Component of some MLL1/MLL complex.

Its subcellular location is the nucleus. The protein resides in the dynein axonemal particle. The enzyme catalyses ATP + H2O = ADP + phosphate + H(+). Its function is as follows. Has double-stranded DNA-stimulated ATPase activity. Has ATP-dependent DNA helicase (5' to 3') activity suggesting a role in nuclear processes such as recombination and transcription. Represses gene activation mediated by beta-catenin. Proposed core component of the chromatin remodeling Ino80 complex which exhibits DNA- and nucleosome-activated ATPase activity and catalyzes ATP-dependent nucleosome sliding. Involved in the endoplasmic reticulum (ER)-associated degradation (ERAD) pathway where it negatively regulates expression of ER stress response genes. May act as a regulator of embryonic heart growth. The chain is RuvB-like 2 (ruvbl2) from Danio rerio (Zebrafish).